Reading from the N-terminus, the 354-residue chain is Diaminopimelate epimerase, chloroplastic (354 aa).

Residues 1–44 constitute a chloroplast transit peptide; the sequence is MSSATAAATATIAAAAAKLAATPAPAPSRRRLTLRGNPTARRCV. Residues Cys-142 and Cys-297 contribute to the active site.

This sequence belongs to the diaminopimelate epimerase family.

The protein resides in the plastid. It is found in the chloroplast. It catalyses the reaction (2S,6S)-2,6-diaminopimelate = meso-2,6-diaminopimelate. It participates in amino-acid biosynthesis; L-lysine biosynthesis via DAP pathway; DL-2,6-diaminopimelate from LL-2,6-diaminopimelate: step 1/1. The sequence is that of Diaminopimelate epimerase, chloroplastic (DAPF) from Oryza sativa subsp. japonica (Rice).